Consider the following 112-residue polypeptide: Large ribosomal subunit protein P2 (112 aa).

The span at 69–85 (AGGAAMPAAAAGGAPAA) shows a compositional bias: low complexity. Residues 69-112 (AGGAAMPAAAAGGAPAAAEDKAEAKKPEAEPEEEEDDMGFSLFD) are disordered. The span at 86–97 (AEDKAEAKKPEA) shows a compositional bias: basic and acidic residues.

The protein belongs to the eukaryotic ribosomal protein P1/P2 family. As to quaternary structure, P1 and P2 exist as dimers at the large ribosomal subunit. Post-translationally, phosphorylated.

Its function is as follows. Plays an important role in the elongation step of protein synthesis. The sequence is that of Large ribosomal subunit protein P2 from Babesia bovis.